We begin with the raw amino-acid sequence, 293 residues long: Small ribosomal subunit biogenesis GTPase RsgA (293 aa).

Positions 63-223 (QNELVRPPVA…VADTPGFSAL (161 aa)) constitute a CP-type G domain. GTP contacts are provided by residues 112 to 115 (SKID) and 166 to 174 (GQSGVGKSS). Residues cysteine 247, cysteine 252, histidine 254, and cysteine 260 each contribute to the Zn(2+) site.

The protein belongs to the TRAFAC class YlqF/YawG GTPase family. RsgA subfamily. Monomer. Associates with 30S ribosomal subunit, binds 16S rRNA. The cofactor is Zn(2+).

It is found in the cytoplasm. Its function is as follows. One of several proteins that assist in the late maturation steps of the functional core of the 30S ribosomal subunit. Helps release RbfA from mature subunits. May play a role in the assembly of ribosomal proteins into the subunit. Circularly permuted GTPase that catalyzes slow GTP hydrolysis, GTPase activity is stimulated by the 30S ribosomal subunit. This Geobacillus thermodenitrificans (strain NG80-2) protein is Small ribosomal subunit biogenesis GTPase RsgA.